A 508-amino-acid polypeptide reads, in one-letter code: DNA-directed RNA polymerase subunit Rpo1C (508 aa).

Positions 1 to 123 (MASLLWRDTS…EIKEKYGENL (123 aa)) are unknown. The segment at 124-508 (SEDVQKVLDD…IYKGYPKTKK (385 aa)) is DNA-directed RNA polymerase subunit Rpo1C.

The protein belongs to the RNA polymerase beta' chain family. Part of the RNA polymerase complex.

It localises to the cytoplasm. It carries out the reaction RNA(n) + a ribonucleoside 5'-triphosphate = RNA(n+1) + diphosphate. Its function is as follows. DNA-dependent RNA polymerase (RNAP) catalyzes the transcription of DNA into RNA using the four ribonucleoside triphosphates as substrates. Forms part of the jaw domain. The protein is DNA-directed RNA polymerase subunit Rpo1C of Thermoplasma acidophilum (strain ATCC 25905 / DSM 1728 / JCM 9062 / NBRC 15155 / AMRC-C165).